Here is a 153-residue protein sequence, read N- to C-terminus: Interleukin-4 (153 aa).

An N-terminal signal peptide occupies residues 1-24 (MGLTSQLLPPLFFLLACAGNFAHG). Disulfide bonds link cysteine 27–cysteine 151, cysteine 48–cysteine 89, and cysteine 70–cysteine 123. Asparagine 62 carries N-linked (GlcNAc...) asparagine glycosylation.

It belongs to the IL-4/IL-13 family.

The protein resides in the secreted. Functionally, participates in at least several B-cell activation processes as well as of other cell types. It is a costimulator of DNA-synthesis. It induces the expression of class II MHC molecules on resting B-cells. It enhances both secretion and cell surface expression of IgE and IgG1. It also regulates the expression of the low affinity Fc receptor for IgE (CD23) on both lymphocytes and monocytes. Positively regulates IL31RA expression in macrophages. Stimulates autophagy in dendritic cells by interfering with mTORC1 signaling and through the induction of RUFY4. This chain is Interleukin-4 (IL4), found in Cercocebus atys (Sooty mangabey).